Consider the following 350-residue polypeptide: Protein pelota homolog (350 aa).

The protein belongs to the eukaryotic release factor 1 family. Pelota subfamily. Monomer. A divalent metal cation serves as cofactor.

The protein localises to the cytoplasm. May function in recognizing stalled ribosomes, interact with stem-loop structures in stalled mRNA molecules, and effect endonucleolytic cleavage of the mRNA. May play a role in the release non-functional ribosomes and degradation of damaged mRNAs. Has endoribonuclease activity. The chain is Protein pelota homolog from Methanosarcina mazei (strain ATCC BAA-159 / DSM 3647 / Goe1 / Go1 / JCM 11833 / OCM 88) (Methanosarcina frisia).